The sequence spans 985 residues: MTQSAARRASSRATPARKTPPAPASQTPAPSPGGTAGTALGPTSRRSSGSAAAKDQPLKEDIRFLGRLLGDVLREQEGAAAFETVETIRQTAVRFRRDGDRQAEQELDRLLKTLSRDQTTSVVRAFSYFSHLANIAEDQHHNRRRRVHALAGSSPQPGSLLRALLSAADEGLSGDALRRFFDAALIVPVLTAHPTEVQRKSILDAQREIARLLAERDAPLTVRERERNVTLLRAHVTKLWQTRMLRTTRLMVADEIENALSYYQTTFLREIPALYRELEEDVATVFPRRGARGEPAPLPAFFQMGSWIGGDRDGNPFVTAQTLRHAAQRQASVILTWYLDEIHALGAELSMSTLLVDVSADLLALAERSPDHSEHRADEPYRRALIGVYARLAATCRELTGEDAGRHAVGPAPAYTRAEELRADLQIVIDSLAAHHGEALADARLASLARAIDVFGFHLASIDLRQVSDVHEATVAELLRVAGVEGAYAALSEADKRTLLLRELQQPRLLTLPFHTYSETTASELDIFRAAREVRARYGSRIVRNYIISHTETLSDLLEVMLLQKEAGMFRHGTNGSGGAGLDVMVIPLFETIEDLRNAPQIMGELLALPGFDAVLAAQGNEQEVMLGYSDSNKDGGFLTSNWELYKTELALVELFERKGVRLRLFHGRGGTVGRGGGPTYQAILSQPPGTVNGQIRLTEQGEIISSKFANPEIGRRNLETIVAATLEATLLPTRNRPKGLEEFEAAMQALSDHAFSAYRHLVYETPGFKDYFFATTPITEIADLNLGSRPASRKLMDRKQRRIEDLRAIPWGFSWGQCRLLLPGWFGFGSAVQRWLDEAGSAKAKAARLATLKRMHKQWPFFANLLSNMDMVLSKADLNVASRYAQLCEDRKLRNAVFSRISAEFTLTEQVLGAITGQSERLADNPLLARSIKNRFPYLDPLNHLQVELLKRFRSGKAGSNDARVRRGIHLSINGIAAGLRNSG.

The span at 1-17 (MTQSAARRASSRATPAR) shows a compositional bias: low complexity. The interval 1 to 55 (MTQSAARRASSRATPARKTPPAPASQTPAPSPGGTAGTALGPTSRRSSGSAAAKD) is disordered. Catalysis depends on residues H193 and K634.

This sequence belongs to the PEPCase type 1 family. Mg(2+) serves as cofactor.

It catalyses the reaction oxaloacetate + phosphate = phosphoenolpyruvate + hydrogencarbonate. Functionally, forms oxaloacetate, a four-carbon dicarboxylic acid source for the tricarboxylic acid cycle. This Ralstonia nicotianae (strain ATCC BAA-1114 / GMI1000) (Ralstonia solanacearum) protein is Phosphoenolpyruvate carboxylase.